The primary structure comprises 319 residues: Cytochrome f (319 aa).

A signal peptide spans 1 to 35 (MQKKDVCEYITKWVSVTISTLVTIGVLVFPLSSEA). Heme-binding residues include tyrosine 36, cysteine 56, cysteine 59, and histidine 60. Residues 285 to 305 (IQGLLVFFASVVLAQIFLVLK) traverse the membrane as a helical segment.

The protein belongs to the cytochrome f family. In terms of assembly, the 4 large subunits of the cytochrome b6-f complex are cytochrome b6, subunit IV (17 kDa polypeptide, petD), cytochrome f and the Rieske protein, while the 4 small subunits are PetG, PetL, PetM and PetN. The complex functions as a dimer. The cofactor is heme.

The protein localises to the plastid. It is found in the chloroplast thylakoid membrane. Functionally, component of the cytochrome b6-f complex, which mediates electron transfer between photosystem II (PSII) and photosystem I (PSI), cyclic electron flow around PSI, and state transitions. The polypeptide is Cytochrome f (Zygnema circumcarinatum (Green alga)).